The chain runs to 141 residues: Organic hydroperoxide resistance protein OhrA (141 aa).

Belongs to the OsmC/Ohr family.

Functionally, involved in organic hydroperoxide resistance. This is Organic hydroperoxide resistance protein OhrA (ohrA) from Bacillus subtilis (strain 168).